Consider the following 77-residue polypeptide: ATP synthase subunit c (77 aa).

The next 2 helical transmembrane spans lie at 10–30 (IAVA…FGNM) and 57–77 (GLID…LFVL).

This sequence belongs to the ATPase C chain family. As to quaternary structure, F-type ATPases have 2 components, F(1) - the catalytic core - and F(0) - the membrane proton channel. F(1) has five subunits: alpha(3), beta(3), gamma(1), delta(1), epsilon(1). F(0) has three main subunits: a(1), b(2) and c(10-14). The alpha and beta chains form an alternating ring which encloses part of the gamma chain. F(1) is attached to F(0) by a central stalk formed by the gamma and epsilon chains, while a peripheral stalk is formed by the delta and b chains.

Its subcellular location is the cell inner membrane. Its function is as follows. F(1)F(0) ATP synthase produces ATP from ADP in the presence of a proton or sodium gradient. F-type ATPases consist of two structural domains, F(1) containing the extramembraneous catalytic core and F(0) containing the membrane proton channel, linked together by a central stalk and a peripheral stalk. During catalysis, ATP synthesis in the catalytic domain of F(1) is coupled via a rotary mechanism of the central stalk subunits to proton translocation. In terms of biological role, key component of the F(0) channel; it plays a direct role in translocation across the membrane. A homomeric c-ring of between 10-14 subunits forms the central stalk rotor element with the F(1) delta and epsilon subunits. The polypeptide is ATP synthase subunit c (Pseudoalteromonas translucida (strain TAC 125)).